The chain runs to 233 residues: DnaA regulatory inactivator Hda (233 aa).

This sequence belongs to the DnaA family. HdA subfamily. In terms of assembly, the active form seems to be an ADP-bound monomer. Forms the RIDA complex (regulatory inactivation of DnaA) of ATP-DnaA, ADP-Hda and the DNA-loaded beta sliding clamp (dnaN).

Functionally, mediates the interaction of DNA replication initiator protein DnaA with DNA polymerase subunit beta sliding clamp (dnaN). Stimulates hydrolysis of ATP-DnaA to ADP-DnaA, rendering DnaA inactive for reinitiation, a process called regulatory inhibition of DnaA or RIDA. The polypeptide is DnaA regulatory inactivator Hda (Escherichia fergusonii (strain ATCC 35469 / DSM 13698 / CCUG 18766 / IAM 14443 / JCM 21226 / LMG 7866 / NBRC 102419 / NCTC 12128 / CDC 0568-73)).